The following is a 425-amino-acid chain: NAC domain-containing protein 10 (425 aa).

A compositionally biased stretch (polar residues) spans 1 to 10; the sequence is MESPDSSSGS. The segment at 1 to 34 is disordered; that stretch reads MESPDSSSGSAPPRVLRRQQQQPGSAPELPPGFR. Positions 12-23 are enriched in low complexity; that stretch reads PPRVLRRQQQQP. Positions 29–200 constitute an NAC domain; the sequence is LPPGFRFHPT…DWVLCRIYKK (172 aa). A DNA-binding region spans residues 129–206; sequence VGVKKALVFY…IYKKTNKAGA (78 aa).

In terms of tissue distribution, highest expression in stamens. Expressed in leaves.

Its subcellular location is the nucleus. Transcription factor of the NAC family associated with male fertility. Involved in anther development, but not in senescence. Reduced expression of NAC5 via RNAi leads to male-sterility. This chain is NAC domain-containing protein 10, found in Oryza sativa subsp. japonica (Rice).